Reading from the N-terminus, the 465-residue chain is Sodium-dependent phosphate transport protein 1 (465 aa).

Asn39, Asn47, and Asn56 each carry an N-linked (GlcNAc...) asparagine glycan. A run of 10 helical transmembrane segments spans residues 79–99 (GLVL…VGYL), 117–137 (SVLS…VIVC), 176–196 (FVMG…LLGW), 199–219 (VFYI…ILLF), 260–280 (LPLW…NLLV), 299–319 (GLLS…AGQM), 337–357 (LFTT…LYLS), 363–383 (TVIF…GQLI), 399–419 (VTAL…GLIL), and 431–451 (FFLM…FAKG).

The protein belongs to the major facilitator superfamily. Sodium/anion cotransporter family. In terms of assembly, interacts with PDZK1.

It localises to the apical cell membrane. It catalyses the reaction 3 Na(+)(out) + phosphate(out) = 3 Na(+)(in) + phosphate(in). The enzyme catalyses urate(out) = urate(in). Its function is as follows. Important for the resorption of phosphate by the kidney. May be involved in actively transporting phosphate into cells via Na(+) cotransport in the renal brush border membrane. Plays a role in urate transport in the kidney. The chain is Sodium-dependent phosphate transport protein 1 (Slc17a1) from Rattus norvegicus (Rat).